A 163-amino-acid polypeptide reads, in one-letter code: NADH-quinone oxidoreductase subunit I (163 aa).

2 consecutive 4Fe-4S ferredoxin-type domains span residues 53-83 (LRRY…IEAG) and 94-123 (VRYD…EGPN). Residues C63, C66, C69, C73, C103, C106, C109, and C113 each contribute to the [4Fe-4S] cluster site.

It belongs to the complex I 23 kDa subunit family. NDH-1 is composed of 14 different subunits. Subunits NuoA, H, J, K, L, M, N constitute the membrane sector of the complex. It depends on [4Fe-4S] cluster as a cofactor.

Its subcellular location is the cell inner membrane. It catalyses the reaction a quinone + NADH + 5 H(+)(in) = a quinol + NAD(+) + 4 H(+)(out). NDH-1 shuttles electrons from NADH, via FMN and iron-sulfur (Fe-S) centers, to quinones in the respiratory chain. The immediate electron acceptor for the enzyme in this species is believed to be ubiquinone. Couples the redox reaction to proton translocation (for every two electrons transferred, four hydrogen ions are translocated across the cytoplasmic membrane), and thus conserves the redox energy in a proton gradient. This is NADH-quinone oxidoreductase subunit I from Brucella melitensis biotype 1 (strain ATCC 23456 / CCUG 17765 / NCTC 10094 / 16M).